The chain runs to 550 residues: Membrane protein insertase YidC (550 aa).

A run of 6 helical transmembrane segments spans residues 6 to 26 (LVLFLVFSLSLVMLWNAWLKQ), 333 to 353 (VVDYGWLTVIAAPLFWVLSWI), 356 to 376 (VVGNWGWAIIIVTILIKLMFF), 430 to 450 (LPILVQIPVFISLYWVLLGSV), 469 to 489 (PYFILPVIMGVSMLIQMKLNP), and 504 to 524 (PVIFTFMFLWFPSGLVLYWVV).

Belongs to the OXA1/ALB3/YidC family. Type 1 subfamily. As to quaternary structure, interacts with the Sec translocase complex via SecD. Specifically interacts with transmembrane segments of nascent integral membrane proteins during membrane integration.

It localises to the cell inner membrane. In terms of biological role, required for the insertion and/or proper folding and/or complex formation of integral membrane proteins into the membrane. Involved in integration of membrane proteins that insert both dependently and independently of the Sec translocase complex, as well as at least some lipoproteins. Aids folding of multispanning membrane proteins. This chain is Membrane protein insertase YidC, found in Aromatoleum aromaticum (strain DSM 19018 / LMG 30748 / EbN1) (Azoarcus sp. (strain EbN1)).